The chain runs to 753 residues: 5-methyltetrahydropteroyltriglutamate--homocysteine methyltransferase (753 aa).

Residues arginine 17–lysine 20 and lysine 117 contribute to the 5-methyltetrahydropteroyltri-L-glutamate site. L-homocysteine is bound by residues isoleucine 431–serine 433 and glutamate 484. L-methionine-binding positions include isoleucine 431 to serine 433 and glutamate 484. 5-methyltetrahydropteroyltri-L-glutamate-binding positions include arginine 515–cysteine 516 and tryptophan 561. Residue aspartate 599 coordinates L-homocysteine. Aspartate 599 is an L-methionine binding site. Residue glutamate 605 coordinates 5-methyltetrahydropteroyltri-L-glutamate. 3 residues coordinate Zn(2+): histidine 641, cysteine 643, and glutamate 665. The Proton donor role is filled by histidine 694. Cysteine 726 contributes to the Zn(2+) binding site.

It belongs to the vitamin-B12 independent methionine synthase family. Zn(2+) serves as cofactor.

The enzyme catalyses 5-methyltetrahydropteroyltri-L-glutamate + L-homocysteine = tetrahydropteroyltri-L-glutamate + L-methionine. The protein operates within amino-acid biosynthesis; L-methionine biosynthesis via de novo pathway; L-methionine from L-homocysteine (MetE route): step 1/1. In terms of biological role, catalyzes the transfer of a methyl group from 5-methyltetrahydrofolate to homocysteine resulting in methionine formation. The polypeptide is 5-methyltetrahydropteroyltriglutamate--homocysteine methyltransferase (Escherichia coli (strain UTI89 / UPEC)).